The primary structure comprises 100 residues: Acylphosphatase (100 aa).

The Acylphosphatase-like domain occupies 3–92; the sequence is RRSYSVIGRV…PLPDTFDIRF (90 aa). Catalysis depends on residues R18 and N36. Residues 76–100 form a disordered region; that stretch reads DDPAHEGPLPDTFDIRFRAPGSASE.

It belongs to the acylphosphatase family.

It carries out the reaction an acyl phosphate + H2O = a carboxylate + phosphate + H(+). This Nitratidesulfovibrio vulgaris (strain ATCC 29579 / DSM 644 / CCUG 34227 / NCIMB 8303 / VKM B-1760 / Hildenborough) (Desulfovibrio vulgaris) protein is Acylphosphatase (acyP).